We begin with the raw amino-acid sequence, 529 residues long: Peptide chain release factor 3 (529 aa).

The tr-type G domain occupies Ala11 to Gln280. GTP is bound by residues Ser20–Thr27, Asp88–His92, and Asn142–Asp145.

This sequence belongs to the TRAFAC class translation factor GTPase superfamily. Classic translation factor GTPase family. PrfC subfamily.

The protein resides in the cytoplasm. Functionally, increases the formation of ribosomal termination complexes and stimulates activities of RF-1 and RF-2. It binds guanine nucleotides and has strong preference for UGA stop codons. It may interact directly with the ribosome. The stimulation of RF-1 and RF-2 is significantly reduced by GTP and GDP, but not by GMP. This is Peptide chain release factor 3 from Alcanivorax borkumensis (strain ATCC 700651 / DSM 11573 / NCIMB 13689 / SK2).